We begin with the raw amino-acid sequence, 148 residues long: Snaclec flavocetin-A subunit beta (148 aa).

The signal sequence occupies residues 1 to 23 (MGQFIFVSFGFLVVATSLSGTEA). 3 cysteine pairs are disulfide-bonded: C27/C38, C55/C144, and C121/C136. Residues 34–145 (YDEHCYQVFQ…CSSKRYVVCK (112 aa)) form the C-type lectin domain.

It belongs to the snaclec family. As to quaternary structure, tetramer of heterodimers of alpha and beta subunits (alphabeta)(4); disulfide-linked. Expressed by the venom gland.

It localises to the secreted. Strong platelet aggregation inhibitor. Binds specifically to platelet glycoprotein Ibalpha (GP1BA) with high affinity and inhibits vWF-dependent platelet aggregation. Has also been observed to induce small agglutinates in washed platelets by binding to GPIb. In Protobothrops flavoviridis (Habu), this protein is Snaclec flavocetin-A subunit beta.